A 175-amino-acid chain; its full sequence is MPETKLVALPEFQELKSNDEYISMQPYKGEDNKSYIANLVRHNALTFCPYYFIEKSGKGSVVYFHPTSDLCGYKNIVHGGFITTMLDEALAFGVFPNFPSKMGVTVQLDTTYVAPALCSHLYKIVTKTTKVEGRKCWTSGELLRLNGSEPPVLCAKASGFFVEPSKLNLEHHVKK.

It is found in the cytoplasm. Its subcellular location is the nucleus. This is an uncharacterized protein from Schizosaccharomyces pombe (strain 972 / ATCC 24843) (Fission yeast).